Consider the following 510-residue polypeptide: Ankyrin repeat domain-containing protein 13C-A (510 aa).

Basic and acidic residues predominate over residues 1–19 (MTGEKIRSLHKDQKPSKDE). The tract at residues 1-35 (MTGEKIRSLHKDQKPSKDEDLLEPDEEATAGGTFT) is disordered. 3 ANK repeats span residues 80 to 111 (DVYF…QKDS), 112 to 141 (HGNT…PVKV), and 145 to 174 (QGWS…QQSR).

The protein resides in the endoplasmic reticulum membrane. Functionally, acts as a molecular chaperone for G protein-coupled receptors, regulating their biogenesis and exit from the ER. The polypeptide is Ankyrin repeat domain-containing protein 13C-A (ankrd13c-a) (Xenopus laevis (African clawed frog)).